A 245-amino-acid chain; its full sequence is Isopentenyl phosphate kinase (245 aa).

Residue 5–9 (KIGGS) participates in ATP binding. Gly45 lines the substrate pocket. Gly46 lines the ATP pocket. Residues His50 and Gly143 each contribute to the substrate site. ATP contacts are provided by residues Asp164, 169 to 174 (YSKDPK), Gly201, and Lys205.

Belongs to the isopentenyl phosphate kinase family. As to quaternary structure, homodimer.

The enzyme catalyses isopentenyl phosphate + ATP = isopentenyl diphosphate + ADP. Its function is as follows. Catalyzes the formation of isopentenyl diphosphate (IPP), the building block of all isoprenoids. Has lower activity with isopentenyl thiolophosphate (ISP). Has low activity with dimethylallyl phosphate (DMAP), 1-butyl phosphate (BP) and 3-buten-1-yl phosphate (BEP). Has no significant activity with geranyl phosphate (in vitro). The chain is Isopentenyl phosphate kinase from Thermoplasma acidophilum (strain ATCC 25905 / DSM 1728 / JCM 9062 / NBRC 15155 / AMRC-C165).